The primary structure comprises 217 residues: Glutathione S-transferase 1 (217 aa).

Residues 1 to 83 (MVMTLYKLDA…YLVSKYGADD (83 aa)) form the GST N-terminal domain. Residues Ser11, 53-55 (HTV), and 67-69 (DSH) contribute to the glutathione site. Residues 89–211 (DPKKRAIVDQ…APGNDLCKDL (123 aa)) form the GST C-terminal domain.

It belongs to the GST superfamily. Theta family. In terms of assembly, homodimer.

It catalyses the reaction RX + glutathione = an S-substituted glutathione + a halide anion + H(+). Functionally, conjugation of reduced glutathione to a wide number of exogenous and endogenous hydrophobic electrophiles. The protein is Glutathione S-transferase 1 (GST1) of Manduca sexta (Tobacco hawkmoth).